A 265-amino-acid chain; its full sequence is MAERSAPIGVMDSGVGGLSVLAEIQRLLPNETLLYVGDCGHIPYGEKSPDYIRERCRRIAGFFHEQGAKAMVLACNTATVAAVADLRELYPTWPLVGMEPAVKPAAAATRSGVVGVLATTGTLQSAKFAALLDRFANDVQVITQPCPGLVELIEAGDLVSPAVRQLLQGYVQPLLAAGCDTLILGCTHYPFLRPLLAGMVPDDVAIIDTGAAVARQLQRLLGANDLLAEGPAGAARFWTSADPEALRKILPVLWHKSDDVQSFAL.

Substrate is bound by residues Asp-12–Ser-13 and Tyr-44–Gly-45. Catalysis depends on Cys-75, which acts as the Proton donor/acceptor. Asn-76–Thr-77 lines the substrate pocket. The active-site Proton donor/acceptor is the Cys-186. Thr-187–His-188 contributes to the substrate binding site.

It belongs to the aspartate/glutamate racemases family.

The enzyme catalyses L-glutamate = D-glutamate. Its pathway is cell wall biogenesis; peptidoglycan biosynthesis. In terms of biological role, provides the (R)-glutamate required for cell wall biosynthesis. This chain is Glutamate racemase, found in Pseudomonas putida (strain ATCC 47054 / DSM 6125 / CFBP 8728 / NCIMB 11950 / KT2440).